The sequence spans 158 residues: NAD(P)H-quinone oxidoreductase subunit J, chloroplastic (158 aa).

The protein belongs to the complex I 30 kDa subunit family. NDH is composed of at least 16 different subunits, 5 of which are encoded in the nucleus.

Its subcellular location is the plastid. It is found in the chloroplast thylakoid membrane. It catalyses the reaction a plastoquinone + NADH + (n+1) H(+)(in) = a plastoquinol + NAD(+) + n H(+)(out). The catalysed reaction is a plastoquinone + NADPH + (n+1) H(+)(in) = a plastoquinol + NADP(+) + n H(+)(out). NDH shuttles electrons from NAD(P)H:plastoquinone, via FMN and iron-sulfur (Fe-S) centers, to quinones in the photosynthetic chain and possibly in a chloroplast respiratory chain. The immediate electron acceptor for the enzyme in this species is believed to be plastoquinone. Couples the redox reaction to proton translocation, and thus conserves the redox energy in a proton gradient. This Helianthus annuus (Common sunflower) protein is NAD(P)H-quinone oxidoreductase subunit J, chloroplastic.